Here is a 495-residue protein sequence, read N- to C-terminus: Putative aldehyde dehydrogenase AldA (495 aa).

Glycine 212–glycine 218 contacts NAD(+). Catalysis depends on residues glutamate 256 and cysteine 290.

Belongs to the aldehyde dehydrogenase family.

The catalysed reaction is an aldehyde + NAD(+) + H2O = a carboxylate + NADH + 2 H(+). The sequence is that of Putative aldehyde dehydrogenase AldA (aldA) from Staphylococcus aureus (strain MRSA252).